The following is a 2187-amino-acid chain: Non-reducing polyketide synthase phnA (2187 aa).

Residues 17 to 255 are N-terminal acylcarrier protein transacylase domain (SAT); sequence LLFGDLSLAH…KYLDIDSPYH (239 aa). The region spanning 383 to 819 is the Ketosynthase family 3 (KS3) domain; sequence HSKIAIVGYS…GGNTAMLIED (437 aa). Catalysis depends on for beta-ketoacyl synthase activity residues Cys555, His690, and His735. The malonyl-CoA:ACP transacylase (MAT) domain stretch occupies residues 926 to 1226; sequence RVAFAFTGQG…GMVKGTIDSR (301 aa). Ser1021 acts as the For acyl/malonyl transferase activity in catalysis. The segment at 1321–1637 is product template (PT) domain; sequence PCAQQIVEEF…PRRALDHLLP (317 aa). Residues 1324–1458 are N-terminal hotdog fold; that stretch reads QQIVEEFHDS…LDVVLYPGQQ (135 aa). In terms of domain architecture, PKS/mFAS DH spans 1324–1633; that stretch reads QQIVEEFHDS…FQGVPRRALD (310 aa). His1356 functions as the Proton acceptor; for dehydratase activity in the catalytic mechanism. The C-terminal hotdog fold stretch occupies residues 1486–1633; the sequence is TETHLIKRGM…FQGVPRRALD (148 aa). The active-site Proton donor; for dehydratase activity is Asp1546. Residues 1652–1669 show a composition bias toward low complexity; that stretch reads KAPVAAVAPPRTPTKAAP. A disordered region spans residues 1652–1681; that stretch reads KAPVAAVAPPRTPTKAAPQSRQAAPKQKRS. Carrier domains follow at residues 1684–1758 and 1796–1874; these read SDVF…SNSD and SSES…YNVM. At Ser1718 the chain carries O-(pantetheine 4'-phosphoryl)serine. Residues 1754-1796 are disordered; sequence LSNSDEDDTPSGDSSTYEDSESQITSPASSVGPETPGGGEFGS. Acidic residues predominate over residues 1757–1774; sequence SDEDDTPSGDSSTYEDSE. Ser1834 carries the O-(pantetheine 4'-phosphoryl)serine modification. Residues 1906 to 2183 form a thioesterase (TE) domain region; the sequence is SSLPQATSIL…PEMGEAVAEF (278 aa). The For thioesterase activity role is filled by Ser2009.

The catalysed reaction is 6 malonyl-CoA + acetyl-CoA + 5 H(+) = 3,6,7,9-tetrahydroxy-3-methyl-2,3-dihydro-1H-naphtho[2,1-b]pyran-1-one + 6 CO2 + 7 CoA + H2O. It functions in the pathway secondary metabolite biosynthesis. In terms of biological role, non-reducing polyketide synthase; part of the gene cluster that mediates the biosynthesis of phenalenones such as herqueinone, compounds that have been reported to treat tumors, bacterial infections and/or mycoses, and rheumatic diseases. The non-reducing polyketide synthase phnA synthesizes the heptaketide backbone and cyclizes it into the angular, hemiketal-containing naphtho-gamma-pyrone prephenalenone. The product template (PT) domain of phnA catalyzes only the C4-C9 aldol condensation, which is unprecedented among known PT domains. The transformation of prephenalenone to phenalenones requires an FAD-dependent monooxygenase phnB, which catalyzes the C2 aromatic hydroxylation of prephenalenone and ring opening of the gamma-pyrone ring simultaneously. Subsequent intramolecular deprotonation of C3 phenolic oxygen accelerates phenalenone ring closure to yield the tricyclic phenalenone core with a C2 hydroxylation. The prenyltransferase phnF further catalyzes reverse C-prenylation of phenalenone by direct electrophilic substitution at C6, or possibly via first a forward O-prenylation of a neighboring phenol in phenalenone, followed by a Claisen rearrangement. The hydroalkoxylation enzyme phnH catalyzes the 5-exo-trig cyclization via acid catalysis after the spontaneous deprotonation of 7-OH, which leads to the formation of the dihydrobenzofuran atrovenetin. Atrovenetin is further converted to deoxyherqueinone by the O-methyltransferase phnC which can methylate C2-OH to stabilize the northern portion of the phenalenone core. Finally, the oxidoreductase phnG converts deoxyherqueinone to herqueinone via C6 hydroxylation. In Penicillium herquei, this protein is Non-reducing polyketide synthase phnA.